The primary structure comprises 277 residues: Deoxyguanosine kinase, mitochondrial (277 aa).

A mitochondrion-targeting transit peptide spans 1–39; sequence MAAGRFLLRRLRASFRSPLRNALVDAPHARAMHDGGGPR. Position 45 to 53 (45 to 53) interacts with ATP; that stretch reads GNIAVGKST. Residues E70, Y100, Q111, and R118 each coordinate substrate. The active-site Proton acceptor is the E141. Substrate contacts are provided by R142 and D147. Position 206–208 (206–208) interacts with ATP; that stretch reads RDR. E211 is a binding site for substrate. An ATP-binding site is contributed by 254–256; sequence EDF.

It belongs to the DCK/DGK family. As to quaternary structure, homodimer. In terms of tissue distribution, spleen and thymus. Expressed at much lower levels in the brain and liver.

The protein localises to the mitochondrion. Its subcellular location is the cytoplasm. It catalyses the reaction 2'-deoxyguanosine + ATP = dGMP + ADP + H(+). The enzyme catalyses 2'-deoxyadenosine + ATP = dAMP + ADP + H(+). In terms of biological role, phosphorylates deoxyguanosine and deoxyadenosine in the mitochondrial matrix, with the highest efficiency for deoxyguanosine. In non-replicating cells, where cytosolic dNTP synthesis is down-regulated, mtDNA synthesis depends solely on DGUOK and TK2. Phosphorylates certain nucleoside analogs. Widely used as target of antiviral and chemotherapeutic agents. The chain is Deoxyguanosine kinase, mitochondrial (Dguok) from Mus musculus (Mouse).